Consider the following 105-residue polypeptide: Small ribosomal subunit protein uS10 (105 aa).

The protein belongs to the universal ribosomal protein uS10 family. In terms of assembly, part of the 30S ribosomal subunit.

Functionally, involved in the binding of tRNA to the ribosomes. The protein is Small ribosomal subunit protein uS10 of Acidobacterium capsulatum (strain ATCC 51196 / DSM 11244 / BCRC 80197 / JCM 7670 / NBRC 15755 / NCIMB 13165 / 161).